Reading from the N-terminus, the 81-residue chain is UPF0349 protein SE_0633 (81 aa).

This sequence belongs to the UPF0349 family.

The protein is UPF0349 protein SE_0633 of Staphylococcus epidermidis (strain ATCC 12228 / FDA PCI 1200).